The following is a 63-amino-acid chain: Large ribosomal subunit protein uL29 (63 aa).

It belongs to the universal ribosomal protein uL29 family.

This Shewanella loihica (strain ATCC BAA-1088 / PV-4) protein is Large ribosomal subunit protein uL29.